The chain runs to 386 residues: Succinate--CoA ligase [ADP-forming] subunit beta (386 aa).

One can recognise an ATP-grasp domain in the interval 9–244; it reads KDILRQFGVP…LDEEDPAEVE (236 aa). ATP contacts are provided by residues K46, 53-55, E99, A102, and E107; that span reads GRG. The Mg(2+) site is built by N199 and D213. Substrate is bound by residues N264 and 321-323; that span reads GIM.

Belongs to the succinate/malate CoA ligase beta subunit family. In terms of assembly, heterotetramer of two alpha and two beta subunits. The cofactor is Mg(2+).

It catalyses the reaction succinate + ATP + CoA = succinyl-CoA + ADP + phosphate. The catalysed reaction is GTP + succinate + CoA = succinyl-CoA + GDP + phosphate. It participates in carbohydrate metabolism; tricarboxylic acid cycle; succinate from succinyl-CoA (ligase route): step 1/1. Succinyl-CoA synthetase functions in the citric acid cycle (TCA), coupling the hydrolysis of succinyl-CoA to the synthesis of either ATP or GTP and thus represents the only step of substrate-level phosphorylation in the TCA. The beta subunit provides nucleotide specificity of the enzyme and binds the substrate succinate, while the binding sites for coenzyme A and phosphate are found in the alpha subunit. This is Succinate--CoA ligase [ADP-forming] subunit beta from Delftia acidovorans (strain DSM 14801 / SPH-1).